We begin with the raw amino-acid sequence, 1396 residues long: ABC-type transporter cicA (1396 aa).

Positions M1–Q40 are disordered. A compositionally biased stretch (low complexity) spans T18–S29. A run of 3 helical transmembrane segments spans residues F142 to L162, G191 to L211, and M300 to V320. The ABC transmembrane type-1 1 domain maps to L143–D466. The N-linked (GlcNAc...) asparagine glycan is linked to N321. The next 3 helical transmembrane spans lie at Y324–V344, I409–A429, and I440–V460. A compositionally biased stretch (basic and acidic residues) spans A510–A533. The interval A510 to P543 is disordered. Residues R525–T751 enclose the ABC transporter 1 domain. ATP is bound at residue G563–S570. A glycan (N-linked (GlcNAc...) asparagine) is linked at N604. The segment at T751–M787 is disordered. Positions K757 to A771 are enriched in acidic residues. Transmembrane regions (helical) follow at residues L816–L836 and Y852–T872. An ABC transmembrane type-1 2 domain is found at L816–N1093. N-linked (GlcNAc...) asparagine glycosylation is present at N880. 4 helical membrane passes run M930–V947, Y951–Y970, L1036–V1056, and S1065–V1085. N-linked (GlcNAc...) asparagine glycans are attached at residues N1096, N1150, and N1154. Residues I1131–E1380 enclose the ABC transporter 2 domain. G1165–S1172 is a binding site for ATP.

The protein belongs to the ABC transporter superfamily. ABCC family. Conjugate transporter (TC 3.A.1.208) subfamily.

The protein resides in the cell membrane. ABC-type transporter; part of the gene cluster that mediates the biosynthesis of cichorine, a phytotoxin active against knapweed, corn, and soybeans. CicA is probably involved in the secretion of cichorine. The protein is ABC-type transporter cicA of Emericella nidulans (strain FGSC A4 / ATCC 38163 / CBS 112.46 / NRRL 194 / M139) (Aspergillus nidulans).